Reading from the N-terminus, the 320-residue chain is Glucokinase (320 aa).

Belongs to the ROK (NagC/XylR) family. As to quaternary structure, monomer. Requires a divalent metal cation as cofactor.

It carries out the reaction D-glucose + ATP = D-glucose 6-phosphate + ADP + H(+). Functionally, catalyzes the phosphorylation of D-glucose to D-glucose 6-phosphate using ATP as the phosphate donor. ITP can also serve as an effective phosphoryl donor. According to Hansen et al., the enzyme has a broad hexose specificity, and in addition to glucose, which shows the highest catalytic efficiency, it can also phosphorylate fructose, mannose, glucosamine, N-acetylglucosamine, N-acetylmannosamine and 2-deoxyglucose. However, according to Sakuraba et al., the enzyme shows strict specificity for D-glucose. The sequence is that of Glucokinase from Aeropyrum pernix (strain ATCC 700893 / DSM 11879 / JCM 9820 / NBRC 100138 / K1).